A 287-amino-acid chain; its full sequence is Bifunctional protein FolD (287 aa).

NADP(+)-binding positions include 160 to 162, Ser189, and Thr230; that span reads GRS.

This sequence belongs to the tetrahydrofolate dehydrogenase/cyclohydrolase family. Homodimer.

The catalysed reaction is (6R)-5,10-methylene-5,6,7,8-tetrahydrofolate + NADP(+) = (6R)-5,10-methenyltetrahydrofolate + NADPH. It catalyses the reaction (6R)-5,10-methenyltetrahydrofolate + H2O = (6R)-10-formyltetrahydrofolate + H(+). It participates in one-carbon metabolism; tetrahydrofolate interconversion. Catalyzes the oxidation of 5,10-methylenetetrahydrofolate to 5,10-methenyltetrahydrofolate and then the hydrolysis of 5,10-methenyltetrahydrofolate to 10-formyltetrahydrofolate. The protein is Bifunctional protein FolD of Chlamydia trachomatis serovar D (strain ATCC VR-885 / DSM 19411 / UW-3/Cx).